Consider the following 282-residue polypeptide: Non-selective voltage-gated ion channel VDAC2 (282 aa).

An N-acetylalanine modification is found at A1. The next 19 beta stranded transmembrane spans lie at 25 to 34 (LVKLDVKTKS), 38 to 46 (VEFTTSGTS), 53 to 63 (VNGSLETKYKW), 68 to 75 (LTFTEKWN), 79 to 88 (TLGTEIAIED), 94 to 103 (LKLTFDTTFS), 110 to 119 (SGKVKAAYKQ), 122 to 129 (VNLGCDVD), 136 to 144 (AIHGSAVVG), 149 to 157 (LAGYQMTFD), 162 to 174 (KLTK…GYKT), 177 to 184 (FQLHTNVN), 188 to 197 (EFAGSIYQKV), 201 to 210 (METAVNLAWT), 217 to 226 (RFGIAAKYQL), 230 to 237 (AAISAKVN), 241 to 250 (LVGVGYTQTL), 253 to 262 (GVKLTLSALV), and 272 to 281 (HKLGLGLELE). NAD(+)-binding positions include 241–243 (LVG) and 259–263 (SALVD).

Belongs to the eukaryotic mitochondrial porin family. As to quaternary structure, monomer, homodimer and higher order oligomers; formation of higher order structures is necessary for scramblase activity. In terms of tissue distribution, expressed in skeletal muscle and oocytes.

It localises to the mitochondrion outer membrane. The protein localises to the membrane. The catalysed reaction is chloride(in) = chloride(out). It catalyses the reaction K(+)(in) = K(+)(out). It carries out the reaction a 1,2-diacyl-sn-glycero-3-phospho-L-serine(in) = a 1,2-diacyl-sn-glycero-3-phospho-L-serine(out). The enzyme catalyses a 1,2-diacyl-sn-glycero-3-phosphocholine(in) = a 1,2-diacyl-sn-glycero-3-phosphocholine(out). The catalysed reaction is a 1,2-diacyl-sn-glycero-3-phospho-(1D-myo-inositol)(in) = a 1,2-diacyl-sn-glycero-3-phospho-(1D-myo-inositol)(out). Non-selective voltage-gated ion channel that mediates the transport of anions and cations through the mitochondrion outer membrane and plasma membrane. The channel adopts an open conformation at zero mV and a closed conformation at both positive and negative potentials. There are two populations of channels; the main that functions in a lower open-state conductance with lower ion selectivity, that switch, in a voltage-dependent manner, from the open to a low-conducting 'closed' state and the other that has a normal ion selectivity in the typical high conductance, 'open' state. Functionally, catalyzes the scrambling of phospholipids across the outer mitochondrial membrane; the mechanism is unrelated to channel activity and is capable of translocating both anionic and zwitterionic phospholipids. This is Non-selective voltage-gated ion channel VDAC2 from Xenopus laevis (African clawed frog).